Reading from the N-terminus, the 802-residue chain is E3 ubiquitin-protein ligase UHRF2 (802 aa).

In terms of domain architecture, Ubiquitin-like spans 1–78 (MWIQVRTIDG…IQLLVRPDPD (78 aa)). Disordered stretches follow at residues 80-116 (LPGT…TSAR) and 153-197 (RASD…STSN). Composition is skewed to polar residues over residues 82–96 (GTST…SNSP), 153–177 (RASD…TNGN), and 188–197 (KLDSVPSTSN). Residues 117–311 (ARLIDPGFGI…VDEIFKIERP (195 aa)) are required for interaction with histone H3. Residues 194-288 (STSNSDCVAA…KELRVKIFLG (95 aa)) form an interaction with PCNP region. A PHD-type zinc finger spans residues 344 to 395 (SCSCRVCGGKHEPNMQLLCDECNVAYHIYCLNPPLDKVPEEEYWYCPSCKTD). Positions 414–644 (KMPSASTESR…LQYPAGYPSD (231 aa)) are methyl-CpG binding and interaction with HDAC1. Residues 448-612 (GPIPGIPVGS…FLVWRYLLRR (165 aa)) enclose the YDG domain. Positions 640-674 (GYPSDKEGKKPKGQSKKQPSGTTKRPISDDDCPSA) are disordered. S667 is subject to Phosphoserine. The RING-type zinc finger occupies 733–772 (CVCCQELVYQPVTTECFHNVCKDCLQRSFKAQVFSCPACR).

Homodimer; disulfide-linked. Binds methylated CpG containing oligonucleotides. Interacts with H3; the interaction has a preference for the 'Lys-9' trimethylated form of H3 (H3K9me3). Interacts with PCNP. Interacts with HDAC1. Interacts directly with CCNE1; the interaction ubiquitinates CCNE1 and appears independent of CCNE1 phosphorylation. Interacts with CCND1; the interaction ubiquitinates CCND1 and appears independent of CCND1 phosphorylation. Interacts with p53/TP53 and RB1. Interacts with UBE2I. Interacts with ZNF618. Interacts with UHRF1. Interacts with FANCD2. Interacts with ATR. Interacts with PCNA. Post-translationally, may be autoubiquitinated; which may lead to proteasomal degradation. In terms of processing, phosphorylated. Phosphorylation may be mediated by CDK2. Autosumoylated.

The protein localises to the nucleus. It localises to the chromosome. It catalyses the reaction S-ubiquitinyl-[E2 ubiquitin-conjugating enzyme]-L-cysteine + [acceptor protein]-L-lysine = [E2 ubiquitin-conjugating enzyme]-L-cysteine + N(6)-ubiquitinyl-[acceptor protein]-L-lysine.. It participates in protein modification; protein ubiquitination. Its activity is regulated as follows. E3 ligase activity is robustly activated by 5-hydroxymethylcytosine. E3 ubiquitin ligase that plays important roles in DNA methylation, histone modifications, cell cycle and DNA repair. Acts as a specific reader for 5-hydroxymethylcytosine (5hmC) and thereby recruits various substrates to these sites to ubiquitinate them. This activity also allows the maintenance of 5mC levels at specific genomic loci and regulates neuron-related gene expression. Participates in cell cycle regulation by ubiquitinating cyclins CCND1 and CCNE1 and thereby inducing G1 arrest. Also ubiquitinates PCNP leading to its degradation by the proteasome. Plays an active role in DNA damage repair by ubiquitinating p21/CDKN1A leading to its proteasomal degradation. Also promotes DNA repair by acting as an interstrand cross-links (ICLs) sensor. Mechanistically, cooperates with UHRF1 to ensure recruitment of FANCD2 to ICLs, leading to FANCD2 monoubiquitination and subsequent activation. Contributes to UV-induced DNA damage response by physically interacting with ATR in response to irradiation, thereby promoting ATR activation. The sequence is that of E3 ubiquitin-protein ligase UHRF2 (UHRF2) from Homo sapiens (Human).